Here is a 613-residue protein sequence, read N- to C-terminus: Probable Xaa-Pro aminopeptidase P (613 aa).

Mn(2+) is bound by residues D408, D419, E517, and E531.

This sequence belongs to the peptidase M24B family. Mn(2+) serves as cofactor.

The enzyme catalyses Release of any N-terminal amino acid, including proline, that is linked to proline, even from a dipeptide or tripeptide.. Its function is as follows. Catalyzes the removal of a penultimate prolyl residue from the N-termini of peptides. This Penicillium rubens (strain ATCC 28089 / DSM 1075 / NRRL 1951 / Wisconsin 54-1255) (Penicillium chrysogenum) protein is Probable Xaa-Pro aminopeptidase P (ampp).